The chain runs to 428 residues: 3-phosphoshikimate 1-carboxyvinyltransferase (428 aa).

Residues Lys22, Ser23, and Arg27 each contribute to the 3-phosphoshikimate site. Lys22 serves as a coordination point for phosphoenolpyruvate. The phosphoenolpyruvate site is built by Gly95 and Arg123. Positions 170, 171, 172, 197, 316, and 343 each coordinate 3-phosphoshikimate. A phosphoenolpyruvate-binding site is contributed by Gln172. The Proton acceptor role is filled by Asp316. Phosphoenolpyruvate-binding residues include Arg347, Arg390, and Lys414.

It belongs to the EPSP synthase family. In terms of assembly, monomer.

The protein resides in the cytoplasm. The catalysed reaction is 3-phosphoshikimate + phosphoenolpyruvate = 5-O-(1-carboxyvinyl)-3-phosphoshikimate + phosphate. It participates in metabolic intermediate biosynthesis; chorismate biosynthesis; chorismate from D-erythrose 4-phosphate and phosphoenolpyruvate: step 6/7. Catalyzes the transfer of the enolpyruvyl moiety of phosphoenolpyruvate (PEP) to the 5-hydroxyl of shikimate-3-phosphate (S3P) to produce enolpyruvyl shikimate-3-phosphate and inorganic phosphate. The protein is 3-phosphoshikimate 1-carboxyvinyltransferase of Laribacter hongkongensis (strain HLHK9).